Here is a 521-residue protein sequence, read N- to C-terminus: MALMVLPFIGPLSVLEGLIALTTVCVVYLLLKHFNKEIPGGLRQLPGPTPLPIIGNLLKLGSKPYLSLTEMSKRFGDVFQIQIGMRPVVVLSGNETVRQALIKQGDDFSGRPDLYSFQFINDGKSLAFSTDQAGVWRARRKLAYSALRSFSSLEGSNAEYSCMLEEHICKETEHLVKEIEKVMKTEGKFDPYRYIVVSVANVICGMCFGRRYDHHDQELVGLVNLSEDFVQVTGSGNPADFIPALRYLPSKAMKKFVEINNRFQSFVQKIVNEHSATYDKDNIRDITDSLIDHCEDRKLDENSNIQMSDEKVVGIVNDLFGAGFDTISTALSWAVGYLVAYPDIEKGLFEEIKENIGLNRNPTISDRSNLPLTDAFILEIFRHSSFLPFTIPHCTTRDTSLNGYYIPKDTCVFINQWQINHDPKLWQDPSSFNPDRFLSEDGSEVNRLDGEKVMVFGLGKRRCIGEVIARNEVFLFLAIMIQKLCFEEMPGEPLDMTPEYGLTMKHKRCNVRASLRLKDGC.

Residue F229 coordinates substrate. C463 contributes to the heme binding site.

This sequence belongs to the cytochrome P450 family. The cofactor is heme.

The protein localises to the endoplasmic reticulum membrane. Its subcellular location is the microsome membrane. It catalyses the reaction an organic molecule + reduced [NADPH--hemoprotein reductase] + O2 = an alcohol + oxidized [NADPH--hemoprotein reductase] + H2O + H(+). Its function is as follows. Cytochromes P450 are a group of heme-thiolate monooxygenases. They oxidize a variety of structurally unrelated compounds, including steroids, fatty acids, and xenobiotics. The sequence is that of Cytochrome P450 1A1 (cyp1a1) from Oryzias latipes (Japanese rice fish).